The chain runs to 276 residues: Cell division protein FtsQ (276 aa).

At 1–11 (MQYILKLKYYL) the chain is on the cytoplasmic side. The helical transmembrane segment at 12 to 32 (YNITWKLVFICVMLVLLIVGI) threads the bilayer. Residues 33 to 276 (HKNIKWVCDY…NVSKGSHDYD (244 aa)) are Periplasmic-facing. One can recognise a POTRA domain in the interval 45 to 115 (GPLSYIIVTG…NTLKINLIEY (71 aa)).

Belongs to the FtsQ/DivIB family. FtsQ subfamily. Part of a complex composed of FtsB, FtsL and FtsQ.

It localises to the cell inner membrane. Its function is as follows. Essential cell division protein. May link together the upstream cell division proteins, which are predominantly cytoplasmic, with the downstream cell division proteins, which are predominantly periplasmic. May control correct divisome assembly. The chain is Cell division protein FtsQ from Blochmanniella floridana.